Here is a 295-residue protein sequence, read N- to C-terminus: bZIP transcription factor RISBZ5 (295 aa).

The segment covering 16–26 (REEAGAGDRKP) has biased composition (basic and acidic residues). A disordered region spans residues 16–157 (REEAGAGDRK…ARRSRRRKQA (142 aa)). Residues 109–119 (SDSDSDCDSLL) are compositionally biased toward acidic residues. The segment covering 120-136 (EAERSPRLRGTKSTETK) has biased composition (basic and acidic residues). Residues 134–197 (ETKRIRRMVS…NTAVTDNRIL (64 aa)) form the bZIP domain. Residues 136-155 (KRIRRMVSNRESARRSRRRK) form a basic motif region. Residues 162 to 176 (LESQVEQLKGENSSL) are leucine-zipper.

In terms of assembly, homodimer.

The protein localises to the nucleus. Its function is as follows. Probable transcription factor that binds to the DNA specific sequence 5'-TGAGTCA-3' found in seed storage protein gene promoters. May function as a negative regulator in cold and drought stress responses. In Oryza sativa subsp. japonica (Rice), this protein is bZIP transcription factor RISBZ5.